The following is a 130-amino-acid chain: Small ribosomal subunit protein uS9 (130 aa).

This sequence belongs to the universal ribosomal protein uS9 family.

This Cupriavidus taiwanensis (strain DSM 17343 / BCRC 17206 / CCUG 44338 / CIP 107171 / LMG 19424 / R1) (Ralstonia taiwanensis (strain LMG 19424)) protein is Small ribosomal subunit protein uS9.